We begin with the raw amino-acid sequence, 400 residues long: CinA-like protein (400 aa).

The protein belongs to the CinA family.

This is CinA-like protein from Sulfurihydrogenibium sp. (strain YO3AOP1).